The sequence spans 547 residues: Methyl-accepting chemotaxis citrate transducer (547 aa).

Over 1–5 (MKNIK) the chain is Cytoplasmic. The helical transmembrane segment at 6–29 (VITGVIATLGIFSALLLVTGILFY) threads the bilayer. The Periplasmic segment spans residues 30–189 (SAVSSDRLNF…ASDQNQSSFT (160 aa)). A helical membrane pass occupies residues 190-213 (QMQWTLGIILLIVLIVLAFIWLGL). Topologically, residues 214 to 547 (QRVLLRPLQR…AAEQANWESF (334 aa)) are cytoplasmic. Positions 215–267 (RVLLRPLQRIMAHIQTIADGDLTHEIEAEGRSEMGQLAAGLKTMQQSLIRTVS) constitute an HAMP domain. The Methyl-accepting transducer domain maps to 272–501 (NADSIYTGAG…ESAAAAAALE (230 aa)). Gln-296 carries the post-translational modification Glutamate methyl ester (Gln). Glu-303 is modified (glutamate methyl ester (Glu)). Gln-310 carries the glutamate methyl ester (Gln) modification. Positions 317–336 (QNTDNARQATGLAKTASETA) are disordered. A glutamate methyl ester (Glu) mark is found at Glu-492 and Glu-501. The segment at 518 to 547 (KQPRREASPTTLSKGLTPQPAAEQANWESF) is disordered.

The protein belongs to the methyl-accepting chemotaxis (MCP) protein family. In terms of processing, methylation level is increased by citrate and decreased by phenol.

It is found in the cell inner membrane. Its function is as follows. Acts as a receptor for citrate and mediates taxis away from phenol. Also mediates an attractant response to metal-citrate complexes. This Salmonella typhimurium (strain LT2 / SGSC1412 / ATCC 700720) protein is Methyl-accepting chemotaxis citrate transducer (tcp).